A 159-amino-acid chain; its full sequence is Bacterioferritin (159 aa).

The region spanning 1-145 (MQGDPDVLRL…TQLALMGQLG (145 aa)) is the Ferritin-like diiron domain. Fe cation contacts are provided by E18 and E51. M52 provides a ligand contact to heme b. Residues H54, E94, E127, and H130 each contribute to the Fe cation site.

It belongs to the bacterioferritin family. In terms of assembly, homooligomer of 24 subunits, arranged as 12 dimers, that are packed together to form an approximately spherical molecule with a central cavity, in which large amounts of iron can be deposited. Heme b is required as a cofactor.

The protein resides in the cytoplasm. The protein localises to the cytosol. It is found in the membrane. The enzyme catalyses 4 Fe(2+) + O2 + 4 H(+) = 4 Fe(3+) + 2 H2O. It catalyses the reaction Fe(2+)(in) = Fe(2+)(out). Iron-storage protein, whose ferroxidase center binds Fe(2+), oxidizes it using dioxygen to Fe(3+), and participates in the subsequent Fe(3+) oxide mineral core formation within the central cavity of the BFR protein shell. Probably plays a crucial role in the intracellular existence of this organism by functioning as a temporary depository for iron in iron deprivation. The sequence is that of Bacterioferritin (bfr) from Mycobacterium leprae (strain TN).